We begin with the raw amino-acid sequence, 379 residues long: Alcohol dehydrogenase 1 (379 aa).

Zn(2+) is bound by residues C47, T49, H69, C99, C102, C105, C113, and C177. The an alcohol site is built by T49 and H69. T49 is an NAD(+) binding site. Residues 202–207 (GLGAVG), D226, R231, T272, V295, 295–297 (VGV), F322, and R372 contribute to the NAD(+) site.

The protein belongs to the zinc-containing alcohol dehydrogenase family. In terms of assembly, homodimer. Zn(2+) serves as cofactor.

The protein resides in the cytoplasm. The catalysed reaction is a primary alcohol + NAD(+) = an aldehyde + NADH + H(+). It catalyses the reaction a secondary alcohol + NAD(+) = a ketone + NADH + H(+). The chain is Alcohol dehydrogenase 1 (ADH1) from Zea mays (Maize).